Here is a 360-residue protein sequence, read N- to C-terminus: Photosystem II protein D1 2 (360 aa).

The next 3 helical transmembrane spans lie at 29 to 46, 118 to 133, and 142 to 156; these read YVGW…TATI, HFLI…EWEL, and WICV…AATA. H118 contacts chlorophyll a. A pheophytin a-binding site is contributed by Y126. D170 and E189 together coordinate [CaMn4O5] cluster. The chain crosses the membrane as a helical span at residues 197–218; it reads FHMLGVAGVFGGSLFSAMHGSL. A chlorophyll a-binding site is contributed by H198. A quinone-binding positions include H215 and 264-265; that span reads SF. H215 serves as a coordination point for Fe cation. H272 contributes to the Fe cation binding site. Residues 274–288 form a helical membrane-spanning segment; sequence FLAAWPVVGIWFTSL. [CaMn4O5] cluster-binding residues include H332, E333, D342, and A344. Residues 345–360 constitute a propeptide that is removed on maturation; that stretch reads AGEATPVALTAPAING.

The protein belongs to the reaction center PufL/M/PsbA/D family. As to quaternary structure, PSII is composed of 1 copy each of membrane proteins PsbA, PsbB, PsbC, PsbD, PsbE, PsbF, PsbH, PsbI, PsbJ, PsbK, PsbL, PsbM, PsbT, PsbX, PsbY, PsbZ, Psb30/Ycf12, peripheral proteins PsbO, CyanoQ (PsbQ), PsbU, PsbV and a large number of cofactors. It forms dimeric complexes. The D1/D2 heterodimer binds P680, chlorophylls that are the primary electron donor of PSII, and subsequent electron acceptors. It shares a non-heme iron and each subunit binds pheophytin, quinone, additional chlorophylls, carotenoids and lipids. D1 provides most of the ligands for the Mn4-Ca-O5 cluster of the oxygen-evolving complex (OEC). There is also a Cl(-1) ion associated with D1 and D2, which is required for oxygen evolution. The PSII complex binds additional chlorophylls, carotenoids and specific lipids. serves as cofactor. Post-translationally, tyr-161 forms a radical intermediate that is referred to as redox-active TyrZ, YZ or Y-Z. C-terminally processed by CtpA; processing is essential to allow assembly of the oxygen-evolving complex and thus photosynthetic growth.

Its subcellular location is the cellular thylakoid membrane. The catalysed reaction is 2 a plastoquinone + 4 hnu + 2 H2O = 2 a plastoquinol + O2. Its function is as follows. Photosystem II (PSII) is a light-driven water:plastoquinone oxidoreductase that uses light energy to abstract electrons from H(2)O, generating O(2) and a proton gradient subsequently used for ATP formation. It consists of a core antenna complex that captures photons, and an electron transfer chain that converts photonic excitation into a charge separation. The D1/D2 (PsbA/PsbD) reaction center heterodimer binds P680, the primary electron donor of PSII as well as several subsequent electron acceptors. This Synechococcus elongatus (strain ATCC 33912 / PCC 7942 / FACHB-805) (Anacystis nidulans R2) protein is Photosystem II protein D1 2.